Here is a 286-residue protein sequence, read N- to C-terminus: MHVPVMPAEAIELLAIRPEGVYLDATAGLGGHSGLIARQLTTGTVIANDRDTRSLEMARANTAEWSDRMCFHYGSFGSLSDAVSQAGFEKVDGLLADLGVSRYQLTAPDRGFSFMADGPLDMRMDASIQTTAADLVNHTDEKTLADLIYQMGEERRARRIARAIVRARPLRSTLHLADVVERAVPRTGRLHPATKTFMALRMAVNDEPGELRRLLEIAPGLLKSGGRMVVISFMSSDDRMVKEKFKELGQSKQATILTKHPLQPSDEESFNNPASRSAKLRALEMR.

Residues 30–32 (GGH), Asp49, Phe88, Asp97, and Gln104 each bind S-adenosyl-L-methionine. Residues 260–286 (HPLQPSDEESFNNPASRSAKLRALEMR) are disordered.

The protein belongs to the methyltransferase superfamily. RsmH family.

It localises to the cytoplasm. It carries out the reaction cytidine(1402) in 16S rRNA + S-adenosyl-L-methionine = N(4)-methylcytidine(1402) in 16S rRNA + S-adenosyl-L-homocysteine + H(+). Specifically methylates the N4 position of cytidine in position 1402 (C1402) of 16S rRNA. This Solibacter usitatus (strain Ellin6076) protein is Ribosomal RNA small subunit methyltransferase H.